Here is an 85-residue protein sequence, read N- to C-terminus: Large ribosomal subunit protein bL27 (85 aa).

The protein belongs to the bacterial ribosomal protein bL27 family.

The sequence is that of Large ribosomal subunit protein bL27 from Sodalis glossinidius (strain morsitans).